We begin with the raw amino-acid sequence, 366 residues long: Mitochondrial substrate carrier family protein H (366 aa).

Positions 1-25 (MLSNSVNNNNNNNNINNSNSNNNDS) are enriched in low complexity. A disordered region spans residues 1 to 26 (MLSNSVNNNNNNNNINNSNSNNNDSN). 3 Solcar repeats span residues 29 to 121 (KNVK…LKEY), 132 to 243 (NIYT…LKNK), and 259 to 360 (SPFF…IKQS). 6 consecutive transmembrane segments (helical) span residues 35-55 (MVAS…LDVV), 96-112 (GVTP…TIYF), 133-151 (IYTV…SASV), 175-192 (VAMA…IPLS), 262-282 (FINF…TTPI), and 340-357 (VAKV…FEYI).

The protein belongs to the mitochondrial carrier (TC 2.A.29) family.

The protein resides in the mitochondrion inner membrane. Functionally, mitochondrial transporter required for glutathione import into mitochondria. The protein is Mitochondrial substrate carrier family protein H of Dictyostelium discoideum (Social amoeba).